Consider the following 1177-residue polypeptide: Topoisomerase 1-associated factor 1 (1177 aa).

5 disordered regions span residues 332–353 (MDQTKKWNKPRRPGKKVDGEQE), 576–598 (KKVAETHGANGDEEGQVSDTEDI), 802–830 (ALAAAERPAGEEVAENTEEESPKPPSILV), 893–1012 (DPPT…DKDM), and 1028–1177 (AFGK…SDSE). The span at 586-597 (GDEEGQVSDTED) shows a compositional bias: acidic residues. Over residues 893 to 908 (DPPTYEDGKGPEDLIR) the composition is skewed to basic and acidic residues. A compositionally biased stretch (acidic residues) spans 923 to 934 (FDDDDEEAENAV). Composition is skewed to basic and acidic residues over residues 935–955 (EEDHGEYRAGKATERKPDGER) and 975–1001 (KDRRAEARRKKELEKFAKQKSTEFVHD). Residues 1002–1011 (SDEEDDDDKD) are compositionally biased toward acidic residues. Over residues 1054-1066 (RTKRRKTPPKRKA) the composition is skewed to basic residues. Residues 1071 to 1080 (DSDDSDEDVQ) show a composition bias toward acidic residues. Positions 1129–1140 (TTGATASITVKS) are enriched in polar residues. Over residues 1145–1155 (MADDDDEEDEA) the composition is skewed to acidic residues.

The protein belongs to the timeless family. Component of the fork protection complex (FPC) consisting of TOF1 and CSM3.

Its subcellular location is the nucleus. Its function is as follows. Forms a fork protection complex (FPC) with CSM3 and which is required for chromosome segregation during meiosis and DNA damage repair. FPC coordinates leading and lagging strand synthesis and moves with the replication fork. FPC stabilizes replication forks in a configuration that is recognized by replication checkpoint sensors. This chain is Topoisomerase 1-associated factor 1 (TOF1), found in Phaeosphaeria nodorum (strain SN15 / ATCC MYA-4574 / FGSC 10173) (Glume blotch fungus).